The primary structure comprises 53 residues: ATP synthase protein 8 (53 aa).

A helical transmembrane segment spans residues 10 to 30; the sequence is IMVFLVSMALLWAIMTMVFFL.

It belongs to the ATPase protein 8 family. F-type ATPases have 2 components, CF(1) - the catalytic core - and CF(0) - the membrane proton channel.

It is found in the mitochondrion membrane. In terms of biological role, mitochondrial membrane ATP synthase (F(1)F(0) ATP synthase or Complex V) produces ATP from ADP in the presence of a proton gradient across the membrane which is generated by electron transport complexes of the respiratory chain. F-type ATPases consist of two structural domains, F(1) - containing the extramembraneous catalytic core and F(0) - containing the membrane proton channel, linked together by a central stalk and a peripheral stalk. During catalysis, ATP synthesis in the catalytic domain of F(1) is coupled via a rotary mechanism of the central stalk subunits to proton translocation. Part of the complex F(0) domain. Minor subunit located with subunit a in the membrane. The sequence is that of ATP synthase protein 8 (MT-ATP8) from Artemia franciscana (Brine shrimp).